The chain runs to 387 residues: Fructose-1,6-bisphosphate aldolase/phosphatase (387 aa).

Asp-13 (proton acceptor; for FBP phosphatase activity) is an active-site residue. Residues Asp-13, His-20, Asp-54, and Asp-55 each coordinate Mg(2+). Residue His-20 participates in beta-D-fructose 1,6-bisphosphate binding. His-20 contacts dihydroxyacetone phosphate. Residue Tyr-92 participates in beta-D-fructose 1,6-bisphosphate binding. Position 96 (Gln-96) interacts with Mg(2+). 105–106 lines the beta-D-fructose 1,6-bisphosphate pocket; it reads GN. Asp-133 serves as a coordination point for Mg(2+). Residue Lys-134 participates in beta-D-fructose 1,6-bisphosphate binding. Residue Lys-134 participates in dihydroxyacetone phosphate binding. The active-site Proton donor/acceptor; for FBP aldolase activity is Tyr-229. Residues Lys-232, Asp-233, and Asp-234 each coordinate Mg(2+). Lys-232 (schiff-base intermediate with DHAP; for FBP aldolase activity) is an active-site residue. Residues 242-243, Arg-266, Asp-287, and Tyr-348 contribute to the beta-D-fructose 1,6-bisphosphate site; that span reads QS. 2 residues coordinate dihydroxyacetone phosphate: Arg-266 and Asp-287.

This sequence belongs to the FBP aldolase/phosphatase family. Homooctamer; dimer of tetramers. It depends on Mg(2+) as a cofactor.

It catalyses the reaction beta-D-fructose 1,6-bisphosphate + H2O = beta-D-fructose 6-phosphate + phosphate. The enzyme catalyses beta-D-fructose 1,6-bisphosphate = D-glyceraldehyde 3-phosphate + dihydroxyacetone phosphate. It participates in carbohydrate biosynthesis; gluconeogenesis. Its function is as follows. Catalyzes two subsequent steps in gluconeogenesis: the aldol condensation of dihydroxyacetone phosphate (DHAP) and glyceraldehyde-3-phosphate (GA3P) to fructose-1,6-bisphosphate (FBP), and the dephosphorylation of FBP to fructose-6-phosphate (F6P). This chain is Fructose-1,6-bisphosphate aldolase/phosphatase, found in Ignicoccus hospitalis (strain KIN4/I / DSM 18386 / JCM 14125).